A 66-amino-acid chain; its full sequence is Venom peptide CtAPI (66 aa).

Disulfide bonds link Cys-7–Cys-44, Cys-16–Cys-40, Cys-20–Cys-33, Cys-24–Cys-64, and Cys-46–Cys-58. The TIL domain occupies 7–64 (CEKDEEFVNCAPRCPQNCRNIRSYQPCLVLTPVCAPGCVCRSGKVKNDRGDCVSITDC).

This sequence belongs to the serine protease inhibitor-like (TIL domain-containing) family. In terms of tissue distribution, expressed by the venom gland.

It is found in the secreted. Functionally, serine protease inhibitor. The protein is Venom peptide CtAPI of Chaerilus tricostatus (Scorpion).